The sequence spans 622 residues: 1-deoxy-D-xylulose-5-phosphate synthase (622 aa).

Thiamine diphosphate-binding positions include His-74 and 115–117 (GHS). Asp-146 provides a ligand contact to Mg(2+). Residues 147 to 148 (GA), Asn-175, Tyr-286, and Glu-366 each bind thiamine diphosphate. Asn-175 lines the Mg(2+) pocket.

It belongs to the transketolase family. DXPS subfamily. Homodimer. Mg(2+) is required as a cofactor. Requires thiamine diphosphate as cofactor.

The catalysed reaction is D-glyceraldehyde 3-phosphate + pyruvate + H(+) = 1-deoxy-D-xylulose 5-phosphate + CO2. Its pathway is metabolic intermediate biosynthesis; 1-deoxy-D-xylulose 5-phosphate biosynthesis; 1-deoxy-D-xylulose 5-phosphate from D-glyceraldehyde 3-phosphate and pyruvate: step 1/1. In terms of biological role, catalyzes the acyloin condensation reaction between C atoms 2 and 3 of pyruvate and glyceraldehyde 3-phosphate to yield 1-deoxy-D-xylulose-5-phosphate (DXP). This chain is 1-deoxy-D-xylulose-5-phosphate synthase, found in Carboxydothermus hydrogenoformans (strain ATCC BAA-161 / DSM 6008 / Z-2901).